Here is a 190-residue protein sequence, read N- to C-terminus: Threonylcarbamoyl-AMP synthase (190 aa).

A YrdC-like domain is found at 7–190 (GDAIAAAIDV…ALTGELFRQG (184 aa)).

Belongs to the SUA5 family. TsaC subfamily.

The protein resides in the cytoplasm. The enzyme catalyses L-threonine + hydrogencarbonate + ATP = L-threonylcarbamoyladenylate + diphosphate + H2O. Its function is as follows. Required for the formation of a threonylcarbamoyl group on adenosine at position 37 (t(6)A37) in tRNAs that read codons beginning with adenine. Catalyzes the conversion of L-threonine, HCO(3)(-)/CO(2) and ATP to give threonylcarbamoyl-AMP (TC-AMP) as the acyladenylate intermediate, with the release of diphosphate. This chain is Threonylcarbamoyl-AMP synthase, found in Escherichia coli O157:H7.